A 408-amino-acid polypeptide reads, in one-letter code: Phosphoglycerate kinase (408 aa).

Substrate is bound by residues Asp-28 to Asn-30, Arg-43, His-66 to Arg-69, Arg-123, and Arg-163. ATP contacts are provided by residues Glu-334 and Gly-358–Thr-361.

It belongs to the phosphoglycerate kinase family. As to quaternary structure, monomer.

The protein resides in the cytoplasm. It carries out the reaction (2R)-3-phosphoglycerate + ATP = (2R)-3-phospho-glyceroyl phosphate + ADP. Its pathway is carbohydrate degradation; glycolysis; pyruvate from D-glyceraldehyde 3-phosphate: step 2/5. This Pyrobaculum aerophilum (strain ATCC 51768 / DSM 7523 / JCM 9630 / CIP 104966 / NBRC 100827 / IM2) protein is Phosphoglycerate kinase.